We begin with the raw amino-acid sequence, 43 residues long: Protein PsbN (43 aa).

A helical transmembrane segment spans residues Thr-5 to Phe-27.

The protein belongs to the PsbN family.

It is found in the plastid. The protein localises to the chloroplast thylakoid membrane. May play a role in photosystem I and II biogenesis. This is Protein PsbN from Exsertotheca crispa (Moss).